The sequence spans 737 residues: Dipeptidyl peptidase 3 (737 aa).

An N-acetylalanine modification is found at alanine 2. Histidine 450 is a binding site for Zn(2+). Glutamate 451 is an active-site residue. Residues histidine 455 and glutamate 508 each contribute to the Zn(2+) site.

Belongs to the peptidase M49 family. Zn(2+) is required as a cofactor. Detected in placenta (at protein level). Detected in erythrocytes (at protein level).

Its subcellular location is the cytoplasm. It is found in the cytosol. It carries out the reaction Release of an N-terminal dipeptide from a peptide comprising four or more residues, with broad specificity. Also acts on dipeptidyl 2-naphthylamides.. With respect to regulation, activated by Co(2+). Inhibited by EDTA and o-phenanthroline (in vitro). In terms of biological role, cleaves and degrades bioactive peptides, including angiotensin, Leu-enkephalin and Met-enkephalin. Also cleaves Arg-Arg-beta-naphthylamide (in vitro). The polypeptide is Dipeptidyl peptidase 3 (DPP3) (Homo sapiens (Human)).